The primary structure comprises 240 residues: Transposase for insertion sequence element IS3411 (240 aa).

Positions 125–240 constitute an Integrase catalytic domain; the sequence is VAERPDQLWV…RASMVFTKRR (116 aa).

In terms of biological role, involved in the transposition of the insertion sequence. The polypeptide is Transposase for insertion sequence element IS3411 (Escherichia coli).